A 389-amino-acid chain; its full sequence is Arrestin-C (389 aa).

The protein belongs to the arrestin family. In terms of tissue distribution, retina and pineal gland.

Its function is as follows. May play a role in an as yet undefined retina-specific signal transduction. Could bind to photoactivated-phosphorylated red/green opsins. The chain is Arrestin-C (arr3) from Lithobates pipiens (Northern leopard frog).